The sequence spans 345 residues: NADPH dehydrogenase (345 aa).

FMN is bound at residue 23-26; the sequence is SPMC. Tyr-28 is a binding site for substrate. FMN is bound by residues Ala-60 and Gln-102. Substrate is bound at residue 164–167; it reads HGAH. Residues Arg-215 and 307–308 each bind FMN; that span reads GR.

The protein belongs to the NADH:flavin oxidoreductase/NADH oxidase family. NamA subfamily. Homotetramer. The cofactor is FMN.

The catalysed reaction is A + NADPH + H(+) = AH2 + NADP(+). Functionally, catalyzes the reduction of the double bond of an array of alpha,beta-unsaturated aldehydes and ketones. It also reduces the nitro group of nitroester and nitroaromatic compounds. It could have a role in detoxification processes. The polypeptide is NADPH dehydrogenase (Bacillus cereus (strain B4264)).